Consider the following 355-residue polypeptide: Protein ECERIFERUM 16 (355 aa).

Disordered regions lie at residues 1-60 (MDSK…LPSN) and 296-315 (HSST…KIHM). A compositionally biased stretch (basic residues) spans 7–28 (AKSKRAHTLHHSKKSHSVHKPK). 2 stretches are compositionally biased toward polar residues: residues 41–53 (QGNQ…QSRR) and 296–310 (HSST…NPSD).

In terms of assembly, interacts with RST1. Expressed in taproots, lateral roots, root tips, leaf veins, cauline leaves, inflorescences, flowers, and siliques.

The protein resides in the cytoplasm. It is found in the cytosol. The protein localises to the endoplasmic reticulum. Its function is as follows. Together with RST1, acts as a cofactor of the cytoplasmic exosome and connects the cytosolic RNA exosome to the SKI complex. Acts as a post-transcriptional gene silencing (PTGS) suppressor. CER16/RIPR can, like RST1 suppress the production of small interfering RNAs (siRNAs) from the CER3 locus, which is involved in cuticule membrane and wax production, and in the typhine and sporopollenin biosynthesis of pollen. This chain is Protein ECERIFERUM 16, found in Arabidopsis thaliana (Mouse-ear cress).